Reading from the N-terminus, the 910-residue chain is Myelin regulatory factor-like protein (910 aa).

A DNA-binding region (NDT80) is located at residues 142–405; it reads GCSYPQQPLC…SNPGQFENDS (264 aa). The disordered stretch occupies residues 189–208; the sequence is RSRSSEVQDPDSEGQNRMPT. Positions 451–559 constitute a Peptidase S74 domain; it reads SDSRAKQNIQ…KLTNNLEERI (109 aa). A coiled-coil region spans residues 543-575; that stretch reads GAVKQLCKLTNNLEERIEELEIWNRKLARLKRL. A helical transmembrane segment spans residues 628 to 648; sequence LVITLIAVMAFCALTIVALYI. The segment at 661 to 682 is disordered; it reads LPPSNITSSQEPALLPTASSSA. Polar residues predominate over residues 663–682; the sequence is PSNITSSQEPALLPTASSSA.

This sequence belongs to the MRF family.

It localises to the membrane. The protein is Myelin regulatory factor-like protein (MYRFL) of Homo sapiens (Human).